The primary structure comprises 816 residues: Subtilisin-like protease SBT2.6 (816 aa).

An N-terminal signal peptide occupies residues 1 to 19 (MDIGCKVLVFFTCFLTVTA). Residues 20–126 (EIYIVTMEGE…VDRDWKVRKL (107 aa)) constitute a propeptide, activation peptide. Residues 22–124 (YIVTMEGEPI…KSVDRDWKVR (103 aa)) form the Inhibitor I9 domain. The Peptidase S8 domain maps to 120–672 (DWKVRKLTTH…SGHVNPSAAL (553 aa)). Residues D160 and H235 each act as charge relay system in the active site. Positions 418-492 (DCQKPEVLNK…SCIPGILITD (75 aa)) constitute a PA domain. 2 N-linked (GlcNAc...) asparagine glycosylation sites follow: N504 and N578. The active-site Charge relay system is the S597. The N-linked (GlcNAc...) asparagine glycan is linked to N702.

The protein belongs to the peptidase S8 family.

The protein localises to the secreted. This is Subtilisin-like protease SBT2.6 from Arabidopsis thaliana (Mouse-ear cress).